A 63-amino-acid chain; its full sequence is MSRMCEICGKKPMVGNNVSHAHNVNKRRFNPNLQKVRSLQENGQVKKITVCTNCIKSGKIVKP.

The protein belongs to the bacterial ribosomal protein bL28 family.

This chain is Large ribosomal subunit protein bL28, found in Desulfatibacillum aliphaticivorans.